The chain runs to 817 residues: Neurabin-2 (817 aa).

Actin-binding stretches follow at residues 1–154 (MMKT…FERS) and 164–283 (EAAA…QHRV). Positions 1 to 165 (MMKTEPRGPG…PAAAGGDKEA (165 aa)) are disordered. A phosphoserine mark is found at Ser15 and Ser17. Over residues 44–58 (GAHHKKYGSNVHRIK) the composition is skewed to basic residues. A phosphoserine mark is found at Ser94, Ser100, and Ser116. An interaction with D(2) dopamine receptor region spans residues 100–371 (SLNENVDHSA…PERGVGNGRA (272 aa)). A compositionally biased stretch (pro residues) spans 131 to 141 (SAQPAPPPHPP). The tract at residues 169–255 (RLLRQERAGL…KRSRVFQPPP (87 aa)) is interaction with ADRA2A, ADRA2B and ADRA2C. Ser192 bears the Phosphoserine mark. Thr193 bears the Phosphothreonine mark. Ser205 bears the Phosphoserine mark. A Phosphothreonine modification is found at Thr207. Positions 216–447 (EKADSRTGLH…SEEEDPAPSR (232 aa)) are disordered. Residues 252 to 261 (QPPPPPPPAP) show a composition bias toward pro residues. Residues 291 to 302 (KPREVRKIKPVE) are compositionally biased toward basic and acidic residues. Low complexity predominate over residues 333 to 342 (STVATAASPA). Positions 344 to 356 (EEPKAQAAPEKEA) are enriched in basic and acidic residues. The span at 410–425 (LEEDDEDDEEDGEPPY) shows a compositional bias: acidic residues. The segment at 417-494 (DEEDGEPPYE…LEKRVERLEL (78 aa)) is interaction with protein phosphatase 1. A Phosphoserine modification is found at Ser438. The PP1-binding motif motif lies at 447-451 (RKIHF). The segment at 480–525 (SAEYELEKRVERLELFPVELEKDSEGLGISIIGMGAGADMGLEKLG) is interaction with RGS2. Residues 496 to 584 (PVELEKDSEG…RVRFMIGRER (89 aa)) enclose the PDZ domain. Positions 595-816 (IQQTLEQERW…NLQTLRNSNS (222 aa)) are interaction with TGN38. Position 658 is a phosphoserine (Ser658). The stretch at 671–788 (FKELQIKHAV…QRRVLEESEL (118 aa)) forms a coiled coil.

Interacts with DCLK2. Possibly exists as a homodimer, homotrimer or a homotetramer. Interacts with F-actin, PPP1CA, neurabin-1, TGN38 and D(2) dopamine receptor. Interacts with RGS1, RGS2, RGS4, RGS19 and ADRA1B, ADRA2A, ADRA2B, ADRA2C, CDKN2A, PPP1R2, RASGFR1 and TIAM1. Interacts (via C-terminus) with SPATA13 (via C-terminal tail). Interacts with ADRA2B. Stimulation of D1 (but not D2) dopamine receptors induces Ser-94 phosphorylation. Dephosphorylation of Ser-94 is mediated mainly by PP1 and to a lesser extent by PP2A. Phosphorylation of spinophilin disrupts its association with F-actin, but does not affect its binding to PP1.

The protein localises to the cytoplasm. Its subcellular location is the cytoskeleton. The protein resides in the nucleus. It localises to the cell projection. It is found in the dendritic spine. The protein localises to the postsynaptic density. Its subcellular location is the synapse. The protein resides in the cell junction. It localises to the adherens junction. It is found in the cell membrane. The protein localises to the lamellipodium. Its subcellular location is the filopodium. The protein resides in the ruffle membrane. In terms of biological role, seems to act as a scaffold protein in multiple signaling pathways. Modulates excitatory synaptic transmission and dendritic spine morphology. Binds to actin filaments (F-actin) and shows cross-linking activity. Binds along the sides of the F-actin. May play an important role in linking the actin cytoskeleton to the plasma membrane at the synaptic junction. Believed to target protein phosphatase 1/PP1 to dendritic spines, which are rich in F-actin, and regulates its specificity toward ion channels and other substrates, such as AMPA-type and NMDA-type glutamate receptors. Plays a role in regulation of G-protein coupled receptor signaling, including dopamine D2 receptors and alpha-adrenergic receptors. May establish a signaling complex for dopaminergic neurotransmission through D2 receptors by linking receptors downstream signaling molecules and the actin cytoskeleton. Binds to ADRA1B and RGS2 and mediates regulation of ADRA1B signaling. May confer to Rac signaling specificity by binding to both, RacGEFs and Rac effector proteins. Probably regulates p70 S6 kinase activity by forming a complex with TIAM1. Required for hepatocyte growth factor (HGF)-induced cell migration. The protein is Neurabin-2 (PPP1R9B) of Homo sapiens (Human).